The chain runs to 291 residues: Glycine--tRNA ligase alpha subunit (291 aa).

It belongs to the class-II aminoacyl-tRNA synthetase family. In terms of assembly, tetramer of two alpha and two beta subunits.

The protein resides in the cytoplasm. The catalysed reaction is tRNA(Gly) + glycine + ATP = glycyl-tRNA(Gly) + AMP + diphosphate. The chain is Glycine--tRNA ligase alpha subunit from Trichlorobacter lovleyi (strain ATCC BAA-1151 / DSM 17278 / SZ) (Geobacter lovleyi).